Here is a 180-residue protein sequence, read N- to C-terminus: O-acetyl-ADP-ribose deacetylase (180 aa).

The Macro domain maps to 1-175 (MSGRINVVQG…LYQRLLGQYD (175 aa)). Substrate is bound by residues 11 to 12 (DI), Asn25, 33 to 35 (GVD), and 122 to 126 (STGIY). Asp35 acts as the Proton acceptor in catalysis.

The protein belongs to the MacroD-type family. YmdB subfamily. As to quaternary structure, homodimer. Interacts with RNase III.

It catalyses the reaction 3''-O-acetyl-ADP-D-ribose + H2O = ADP-D-ribose + acetate + H(+). The catalysed reaction is 2''-O-acetyl-ADP-D-ribose + H2O = ADP-D-ribose + acetate + H(+). In terms of biological role, deacetylates O-acetyl-ADP ribose to yield ADP-ribose and free acetate. Down-regulates ribonuclease 3 (RNase III) activity. Acts by interacting directly with the region of the ribonuclease that is required for dimerization/activation. This is O-acetyl-ADP-ribose deacetylase from Cronobacter sakazakii (strain ATCC BAA-894) (Enterobacter sakazakii).